The primary structure comprises 451 residues: Bifunctional protein GlmU (451 aa).

Residues 1–217 form a pyrophosphorylase region; it reads MKTLILAAGL…IDEVTGVNDR (217 aa). UDP-N-acetyl-alpha-D-glucosamine is bound by residues 6–9, Lys-20, Gln-68, 73–74, 95–97, Gly-134, Glu-146, Asn-161, and Asn-215; these read LAAG, GT, and YGD. Asp-97 is a binding site for Mg(2+). Asn-215 contributes to the Mg(2+) binding site. The segment at 218–238 is linker; the sequence is IQLSKLEKNMRKRINEKLMRE. Positions 239–451 are N-acetyltransferase; the sequence is GVRIIDPESV…GGNQNADSKE (213 aa). UDP-N-acetyl-alpha-D-glucosamine is bound by residues Arg-320 and Lys-338. The active-site Proton acceptor is His-350. Positions 353 and 364 each coordinate UDP-N-acetyl-alpha-D-glucosamine. Acetyl-CoA-binding positions include Ala-367, 373–374, Ser-392, Ala-410, and Arg-427; that span reads NY.

This sequence in the N-terminal section; belongs to the N-acetylglucosamine-1-phosphate uridyltransferase family. The protein in the C-terminal section; belongs to the transferase hexapeptide repeat family. In terms of assembly, homotrimer. Mg(2+) serves as cofactor.

The protein resides in the cytoplasm. The enzyme catalyses alpha-D-glucosamine 1-phosphate + acetyl-CoA = N-acetyl-alpha-D-glucosamine 1-phosphate + CoA + H(+). It catalyses the reaction N-acetyl-alpha-D-glucosamine 1-phosphate + UTP + H(+) = UDP-N-acetyl-alpha-D-glucosamine + diphosphate. The protein operates within nucleotide-sugar biosynthesis; UDP-N-acetyl-alpha-D-glucosamine biosynthesis; N-acetyl-alpha-D-glucosamine 1-phosphate from alpha-D-glucosamine 6-phosphate (route II): step 2/2. It functions in the pathway nucleotide-sugar biosynthesis; UDP-N-acetyl-alpha-D-glucosamine biosynthesis; UDP-N-acetyl-alpha-D-glucosamine from N-acetyl-alpha-D-glucosamine 1-phosphate: step 1/1. Its pathway is bacterial outer membrane biogenesis; LPS lipid A biosynthesis. Catalyzes the last two sequential reactions in the de novo biosynthetic pathway for UDP-N-acetylglucosamine (UDP-GlcNAc). The C-terminal domain catalyzes the transfer of acetyl group from acetyl coenzyme A to glucosamine-1-phosphate (GlcN-1-P) to produce N-acetylglucosamine-1-phosphate (GlcNAc-1-P), which is converted into UDP-GlcNAc by the transfer of uridine 5-monophosphate (from uridine 5-triphosphate), a reaction catalyzed by the N-terminal domain. The sequence is that of Bifunctional protein GlmU from Thermosipho africanus (strain TCF52B).